Consider the following 653-residue polypeptide: 4-alpha-glucanotransferase (653 aa).

The Nucleophile role is filled by Glu123. Residue Asp214 is the Proton donor of the active site.

This sequence belongs to the glycosyl hydrolase 57 family.

It catalyses the reaction Transfers a segment of a (1-&gt;4)-alpha-D-glucan to a new position in an acceptor, which may be glucose or a (1-&gt;4)-alpha-D-glucan.. This Thermococcus kodakarensis (strain ATCC BAA-918 / JCM 12380 / KOD1) (Pyrococcus kodakaraensis (strain KOD1)) protein is 4-alpha-glucanotransferase.